A 349-amino-acid polypeptide reads, in one-letter code: Protein disulfide isomerase Creld2 (349 aa).

Positions 1 to 22 are cleaved as a signal peptide; sequence MHLLLAAGFGLLLLLLPPPAAS. The CXXC motif lies at 28-31; sequence CQRC. Intrachain disulfides connect cysteine 28-cysteine 31, cysteine 137-cysteine 151, cysteine 145-cysteine 163, and cysteine 165-cysteine 174. An EGF-like 1 domain is found at 133-175; it reads DCKECQGGSERPCSGNGYCSGDGSRQGDGSCQCHAGYKGPLCI. Asparagine 187 carries an N-linked (GlcNAc...) asparagine glycan. Residues 190–237 form an FU 1 repeat; the sequence is HSICLACDESCKTCSGPSNKDCVQCEVGWARVEDACVDVDECAAETPP. An N-linked (GlcNAc...) asparagine glycan is attached at asparagine 248. One copy of the FU 2 repeat lies at 250 to 297; sequence SYICEECDSTCVGCTGKGPANCKECIAGYTKQSGQCADIDECSLEEKA. Residues 260–263 carry the CXXC motif; the sequence is CVGC. 4 cysteine pairs are disulfide-bonded: cysteine 260–cysteine 263, cysteine 291–cysteine 305, cysteine 298–cysteine 314, and cysteine 316–cysteine 327. Positions 287 to 328 constitute an EGF-like 2; calcium-binding domain; it reads DIDECSLEEKACKRRNENCYNVPGSFVCVCPDGFEETEDACV.

This sequence belongs to the CRELD family. In terms of assembly, interacts with Chrna4. Component of a complex containing at least Creld2, Manf, Matn3 and Pdia4. As to expression, broadly expressed in brain (at protein level).

The protein resides in the endoplasmic reticulum. It catalyses the reaction Catalyzes the rearrangement of -S-S- bonds in proteins.. Protein disulfide isomerase. Might play a role in the unfolded protein response. May regulate transport of alpha4-beta2 neuronal acetylcholine receptor. This is Protein disulfide isomerase Creld2 (Creld2) from Rattus norvegicus (Rat).